The sequence spans 98 residues: UPF0235 protein azo3464 (98 aa).

This sequence belongs to the UPF0235 family.

The protein is UPF0235 protein azo3464 of Azoarcus sp. (strain BH72).